Here is a 363-residue protein sequence, read N- to C-terminus: Chorismate synthase (363 aa).

R47 is an NADP(+) binding site. Residues 124-126, G285, 300-304, and R326 each bind FMN; these read RSS and KPTAT.

The protein belongs to the chorismate synthase family. Homotetramer. Requires FMNH2 as cofactor.

The enzyme catalyses 5-O-(1-carboxyvinyl)-3-phosphoshikimate = chorismate + phosphate. The protein operates within metabolic intermediate biosynthesis; chorismate biosynthesis; chorismate from D-erythrose 4-phosphate and phosphoenolpyruvate: step 7/7. Functionally, catalyzes the anti-1,4-elimination of the C-3 phosphate and the C-6 proR hydrogen from 5-enolpyruvylshikimate-3-phosphate (EPSP) to yield chorismate, which is the branch point compound that serves as the starting substrate for the three terminal pathways of aromatic amino acid biosynthesis. This reaction introduces a second double bond into the aromatic ring system. This Opitutus terrae (strain DSM 11246 / JCM 15787 / PB90-1) protein is Chorismate synthase.